Consider the following 36-residue polypeptide: Tddefensin (36 aa).

Disulfide bonds link Cys-3–Cys-24, Cys-10–Cys-32, and Cys-14–Cys-34.

The protein belongs to the invertebrate defensin family. In terms of tissue distribution, expressed by the venom gland.

It localises to the secreted. Its function is as follows. Antibacterial peptide mostly active against Gram-positive bacteria. This chain is Tddefensin, found in Tityus discrepans (Venezuelan scorpion).